The chain runs to 114 residues: uncharacterized protein (114 aa).

A disordered region spans residues Met1–Met24.

In terms of tissue distribution, expressed in kidney and liver.

This is an uncharacterized protein from Homo sapiens (Human).